Here is a 152-residue protein sequence, read N- to C-terminus: SsrA-binding protein (152 aa).

The protein belongs to the SmpB family.

It localises to the cytoplasm. Functionally, required for rescue of stalled ribosomes mediated by trans-translation. Binds to transfer-messenger RNA (tmRNA), required for stable association of tmRNA with ribosomes. tmRNA and SmpB together mimic tRNA shape, replacing the anticodon stem-loop with SmpB. tmRNA is encoded by the ssrA gene; the 2 termini fold to resemble tRNA(Ala) and it encodes a 'tag peptide', a short internal open reading frame. During trans-translation Ala-aminoacylated tmRNA acts like a tRNA, entering the A-site of stalled ribosomes, displacing the stalled mRNA. The ribosome then switches to translate the ORF on the tmRNA; the nascent peptide is terminated with the 'tag peptide' encoded by the tmRNA and targeted for degradation. The ribosome is freed to recommence translation, which seems to be the essential function of trans-translation. The protein is SsrA-binding protein of Rickettsia conorii (strain ATCC VR-613 / Malish 7).